The primary structure comprises 128 residues: Small ribosomal subunit protein uS11 (128 aa).

The protein belongs to the universal ribosomal protein uS11 family. As to quaternary structure, part of the 30S ribosomal subunit. Interacts with proteins S7 and S18. Binds to IF-3.

Located on the platform of the 30S subunit, it bridges several disparate RNA helices of the 16S rRNA. Forms part of the Shine-Dalgarno cleft in the 70S ribosome. The chain is Small ribosomal subunit protein uS11 from Aster yellows witches'-broom phytoplasma (strain AYWB).